Here is a 355-residue protein sequence, read N- to C-terminus: Homoserine O-succinyltransferase (355 aa).

Residue cysteine 146 is the Acyl-thioester intermediate of the active site. The substrate site is built by lysine 167 and serine 196. Histidine 239 functions as the Proton acceptor in the catalytic mechanism. Glutamate 241 is a catalytic residue. Arginine 253 provides a ligand contact to substrate.

It belongs to the MetA family.

Its subcellular location is the cytoplasm. The catalysed reaction is L-homoserine + succinyl-CoA = O-succinyl-L-homoserine + CoA. It functions in the pathway amino-acid biosynthesis; L-methionine biosynthesis via de novo pathway; O-succinyl-L-homoserine from L-homoserine: step 1/1. Its function is as follows. Transfers a succinyl group from succinyl-CoA to L-homoserine, forming succinyl-L-homoserine. In Methylococcus capsulatus (strain ATCC 33009 / NCIMB 11132 / Bath), this protein is Homoserine O-succinyltransferase.